The primary structure comprises 185 residues: RING-H2 finger protein ATL8 (185 aa).

A helical membrane pass occupies residues 28 to 48 (LVLILAVLLCALTCIIGLIAV). The RING-type; atypical zinc-finger motif lies at 104–146 (CAICLTEFAAGDELRVLPQCGHGFHVSCIDTWLGSHSSCPSCR). Residues 161–185 (PGSSSSGPEPDTRIKQREDGPDNLP) form a disordered region. A compositionally biased stretch (basic and acidic residues) spans 170 to 185 (PDTRIKQREDGPDNLP).

The protein belongs to the RING-type zinc finger family. ATL subfamily.

The protein resides in the membrane. The enzyme catalyses S-ubiquitinyl-[E2 ubiquitin-conjugating enzyme]-L-cysteine + [acceptor protein]-L-lysine = [E2 ubiquitin-conjugating enzyme]-L-cysteine + N(6)-ubiquitinyl-[acceptor protein]-L-lysine.. Its pathway is protein modification; protein ubiquitination. The chain is RING-H2 finger protein ATL8 (ATL8) from Arabidopsis thaliana (Mouse-ear cress).